A 182-amino-acid polypeptide reads, in one-letter code: ADP-ribosylation factor-like protein 11 (182 aa).

Glycine 2 is lipidated: N-myristoyl glycine. GTP is bound by residues 19 to 26 (GLDSAGKT), 63 to 67 (DVGGQ), and 122 to 125 (NKQE).

This sequence belongs to the small GTPase superfamily. Arf family.

Functionally, may play a role in apoptosis. May act as a tumor suppressor. The protein is ADP-ribosylation factor-like protein 11 (ARL11) of Bos taurus (Bovine).